Consider the following 147-residue polypeptide: Large ribosomal subunit protein uL15 (147 aa).

Positions Met-1 to Ala-58 are disordered. Gly residues-rich tracts occupy residues Arg-21–Ser-31 and Ala-42–Gly-52.

Belongs to the universal ribosomal protein uL15 family. As to quaternary structure, part of the 50S ribosomal subunit.

In terms of biological role, binds to the 23S rRNA. The sequence is that of Large ribosomal subunit protein uL15 from Desulfitobacterium hafniense (strain Y51).